The primary structure comprises 117 residues: Prefoldin subunit beta (117 aa).

It belongs to the prefoldin subunit beta family. In terms of assembly, heterohexamer of two alpha and four beta subunits.

The protein resides in the cytoplasm. Functionally, molecular chaperone capable of stabilizing a range of proteins. Seems to fulfill an ATP-independent, HSP70-like function in archaeal de novo protein folding. This is Prefoldin subunit beta from Thermococcus kodakarensis (strain ATCC BAA-918 / JCM 12380 / KOD1) (Pyrococcus kodakaraensis (strain KOD1)).